We begin with the raw amino-acid sequence, 575 residues long: Muellerian-inhibiting factor (575 aa).

The N-terminal stretch at 1–20 is a signal peptide; it reads MQGPSLSQLVLVLMGALLEA. The propeptide occupies 21–466; sequence GTPREEVSST…ERSGPARAQR (446 aa). Asparagine 78 and asparagine 343 each carry an N-linked (GlcNAc...) asparagine glycan. 3 cysteine pairs are disulfide-bonded: cysteine 477–cysteine 541, cysteine 503–cysteine 572, and cysteine 507–cysteine 574.

Belongs to the TGF-beta family. Homodimer; disulfide-linked. Preproprotein is proteolytically processed to generate N- and C-terminal cleavage products that homodimerize and associate to form a biologically active non-covalent complex. Binding of the non-covalent complex to AMHR2 induces dissociation of the pro-region from the mature C-terminal dimer. The N-terminal portion of the protein, despite having no intrinsic activity, has the role of amplifying the activity of the C-terminus. In terms of tissue distribution, detected in fetal Sertoli cells. Expressed in granulosa cells of growing follicles but also in theca cells of preovulatory follicles and corpora lutea (at protein level).

Its subcellular location is the secreted. Its function is as follows. Plays an important role in several reproductive functions. Induces Muellerian duct regression during male fetal sexual differentiation and plays a role in Leydig cell differentiation and function. In female acts as a negative regulator of the primordial to primary follicle transition and decreases FSH sensitivity of growing follicles. AMH signals by binding to a specific type-II receptor, AMHR2, that heterodimerizes with type-I receptors (ACVR1 and BMPR1A), and recruiting SMAD proteins that are translocated to the nucleus to regulate target gene expression. This Sus scrofa (Pig) protein is Muellerian-inhibiting factor (AMH).